A 147-amino-acid chain; its full sequence is Endothelial differentiation-related factor 1 homolog (147 aa).

A disordered region spans residues 1 to 69 (MAESDWDTVT…KLDRETEELH (69 aa)). Residues 33–42 (RRGEEVETSK) are compositionally biased toward basic and acidic residues. Polar residues predominate over residues 46–58 (AGQNKQHTITRNT). The segment covering 59–69 (AKLDRETEELH) has biased composition (basic and acidic residues). An HTH cro/C1-type domain is found at 81–135 (IQQGRQGKGMTQKDLATKINEKPQVIADYECGKAIPNNQVMGKIERVIGLKLRGK). The H-T-H motif DNA-binding region spans 92–111 (QKDLATKINEKPQVIADYEC).

The protein localises to the nucleus. Probable transcriptional coactivator. This chain is Endothelial differentiation-related factor 1 homolog (edf1), found in Xenopus laevis (African clawed frog).